The chain runs to 179 residues: MSLKDRFDRFIDYFTEDEDSSLPYEKRDEPVFTPVNSSQEPALPMNQPSQSVGTKENNITRLHARQQELANQSQRATDKVIIDVRYPRKYEDATEIVDLLAGNESILIDFQYMTEVQARRCLDYLDGACHVLAGNLKKVASTMYLLTPVNVIVNVEDIRLPDEDQQGEFGFDMKRNRVR.

Residues 22–53 (LPYEKRDEPVFTPVNSSQEPALPMNQPSQSVG) are disordered. Positions 34–53 (PVNSSQEPALPMNQPSQSVG) are enriched in polar residues.

It belongs to the SepF family. As to quaternary structure, homodimer. Interacts with FtsZ.

It is found in the cytoplasm. In terms of biological role, cell division protein that is part of the divisome complex and is recruited early to the Z-ring. Probably stimulates Z-ring formation, perhaps through the cross-linking of FtsZ protofilaments. Its function overlaps with FtsA. The sequence is that of Cell division protein SepF from Streptococcus pneumoniae (strain P1031).